The primary structure comprises 438 residues: UDP-N-acetylmuramoylalanine--D-glutamate ligase (438 aa).

Position 112 to 118 (112 to 118) interacts with ATP; sequence GSNGKST.

The protein belongs to the MurCDEF family.

It localises to the cytoplasm. It catalyses the reaction UDP-N-acetyl-alpha-D-muramoyl-L-alanine + D-glutamate + ATP = UDP-N-acetyl-alpha-D-muramoyl-L-alanyl-D-glutamate + ADP + phosphate + H(+). It functions in the pathway cell wall biogenesis; peptidoglycan biosynthesis. Its function is as follows. Cell wall formation. Catalyzes the addition of glutamate to the nucleotide precursor UDP-N-acetylmuramoyl-L-alanine (UMA). The polypeptide is UDP-N-acetylmuramoylalanine--D-glutamate ligase (Shigella boydii serotype 4 (strain Sb227)).